The sequence spans 372 residues: MTVLVALFCLVTWTLCTRIPQYSTQGTQQPQQPEKTPHPHPQPEDAFPPTHATDLKIHDPSIIHVDGTYYSYSVGRHIRIHQAPSLDGPWERTGAVLNADSVIPKGDRKAPWAPQTVHHNDTYYCFYAVSNSGCRDSAIGVATSKSPGPGGWTDHGLLVQSGTGKGSDEHPFTSSNTIDPSVFVGEDGHGYLTFGSFWSGIWQVPLDESLLSVAGDTSSEARQLVYMEKAPLPASKHPNPLCREPSGARPIEGSFLSYHEPWYYLWFSYGKCCKFDTKNLPPPGREYSIRVGRSKSPRGPFVDKQGRDLANGGGEIVYASNRDVYAPGGQGVLTEKSGDILYYHYCRYPVIQEIEVDADLTVNKSTSYDFWV.

The N-terminal stretch at 1–16 is a signal peptide; the sequence is MTVLVALFCLVTWTLC. The span at 23–34 shows a compositional bias: low complexity; the sequence is STQGTQQPQQPE. The disordered stretch occupies residues 23 to 52; sequence STQGTQQPQQPEKTPHPHPQPEDAFPPTHA. Residue Asp-59 is the Proton acceptor of the active site. N-linked (GlcNAc...) asparagine glycosylation occurs at Asn-120. The active-site Proton donor is Glu-252. N-linked (GlcNAc...) asparagine glycosylation is present at Asn-363.

The protein belongs to the glycosyl hydrolase 43 family.

It is found in the secreted. The catalysed reaction is Endohydrolysis of (1-&gt;5)-alpha-arabinofuranosidic linkages in (1-&gt;5)-arabinans.. The protein operates within glycan metabolism; L-arabinan degradation. Endo-1,5-alpha-L-arabinanase involved in degradation of pectin. Its preferred substrate is linear 1,5-alpha-L-arabinan. This Aspergillus fumigatus (strain ATCC MYA-4609 / CBS 101355 / FGSC A1100 / Af293) (Neosartorya fumigata) protein is Probable arabinan endo-1,5-alpha-L-arabinosidase B (abnB).